The chain runs to 339 residues: MSGELWITLVDTADIVGVTLTFCVNIVLLGLLKTRGKNLGTYKYLMAFFSVFSIFYAIIEFILRPIMHIENTTFFLISRKRFNYSTKLGKINSAFYCACFATSFVVSGVHFVYRYFATCKPNLLRLFNLPTLLLWPLGCSVPVTMWASVSYFLYPDTEYTEAAVTNVLNNHYNWIKKENVSYIAYVYYQYENGVRHIYLKNLLGCFVHYFVMSMTFVVMFYCGYATWKTMNEHKDVSDRTRALQKQLFKALVLQTLIPTIFMYAPTGVMFIAPFFDVNLNANANFIVFCSFLYPGLDPLILILIIRDFRRTIFNFLCGKKNSVDESRSTTRANLSQVPT.

Residues 1 to 11 (MSGELWITLVD) are Extracellular-facing. A helical membrane pass occupies residues 12 to 32 (TADIVGVTLTFCVNIVLLGLL). The Cytoplasmic segment spans residues 33 to 42 (KTRGKNLGTY). Residues 43–63 (KYLMAFFSVFSIFYAIIEFIL) form a helical membrane-spanning segment. At 64-92 (RPIMHIENTTFFLISRKRFNYSTKLGKIN) the chain is on the extracellular side. N71 and N83 each carry an N-linked (GlcNAc...) asparagine glycan. A helical transmembrane segment spans residues 93 to 113 (SAFYCACFATSFVVSGVHFVY). Topologically, residues 114–131 (RYFATCKPNLLRLFNLPT) are cytoplasmic. Residues 132-152 (LLLWPLGCSVPVTMWASVSYF) form a helical membrane-spanning segment. Residues 153–201 (LYPDTEYTEAAVTNVLNNHYNWIKKENVSYIAYVYYQYENGVRHIYLKN) lie on the Extracellular side of the membrane. N179 is a glycosylation site (N-linked (GlcNAc...) asparagine). A helical transmembrane segment spans residues 202–222 (LLGCFVHYFVMSMTFVVMFYC). The Cytoplasmic portion of the chain corresponds to 223 to 254 (GYATWKTMNEHKDVSDRTRALQKQLFKALVLQ). A helical membrane pass occupies residues 255 to 275 (TLIPTIFMYAPTGVMFIAPFF). At 276-284 (DVNLNANAN) the chain is on the extracellular side. The helical transmembrane segment at 285-305 (FIVFCSFLYPGLDPLILILII) threads the bilayer. Over 306–339 (RDFRRTIFNFLCGKKNSVDESRSTTRANLSQVPT) the chain is Cytoplasmic.

The protein belongs to the nematode receptor-like protein str family. As to quaternary structure, interacts with odr-4. Strongly expressed in the sensory cilia of AWA olfactory neurons, and at low levels in the CEP neurons.

The protein localises to the cell projection. The protein resides in the cilium membrane. Its function is as follows. An odorant receptor which affects chemotaxis to the volatile odorant diacetyl. Specifies AWA neuronal cell fate via the odr-7 pathway. This is Serpentine receptor class r-10 from Caenorhabditis elegans.